Consider the following 545-residue polypeptide: Chaperonin GroEL 1 (545 aa).

Residues 29-32 (TLGP), 86-90 (DGTTT), Gly413, 479-481 (DAA), and Asp495 contribute to the ATP site. Residues 525–545 (PEPKENNPAGSGAGMGGDFDY) are disordered. Over residues 535–545 (SGAGMGGDFDY) the composition is skewed to gly residues.

Belongs to the chaperonin (HSP60) family. As to quaternary structure, forms a cylinder of 14 subunits composed of two heptameric rings stacked back-to-back. Interacts with the co-chaperonin GroES.

It is found in the cytoplasm. The catalysed reaction is ATP + H2O + a folded polypeptide = ADP + phosphate + an unfolded polypeptide.. In terms of biological role, together with its co-chaperonin GroES, plays an essential role in assisting protein folding. The GroEL-GroES system forms a nano-cage that allows encapsulation of the non-native substrate proteins and provides a physical environment optimized to promote and accelerate protein folding. This chain is Chaperonin GroEL 1, found in Thermosynechococcus vestitus (strain NIES-2133 / IAM M-273 / BP-1).